A 314-amino-acid chain; its full sequence is Ribosomal RNA small subunit methyltransferase H 2 (314 aa).

S-adenosyl-L-methionine is bound by residues Ala-33–His-35, Asp-53, Tyr-80, Asp-101, and Gln-108. A disordered region spans residues Lys-293–Leu-314.

Belongs to the methyltransferase superfamily. RsmH family.

Its subcellular location is the cytoplasm. The catalysed reaction is cytidine(1402) in 16S rRNA + S-adenosyl-L-methionine = N(4)-methylcytidine(1402) in 16S rRNA + S-adenosyl-L-homocysteine + H(+). Its function is as follows. Specifically methylates the N4 position of cytidine in position 1402 (C1402) of 16S rRNA. This Agathobacter rectalis (strain ATCC 33656 / DSM 3377 / JCM 17463 / KCTC 5835 / VPI 0990) (Eubacterium rectale) protein is Ribosomal RNA small subunit methyltransferase H 2.